The following is a 178-amino-acid chain: Large ribosomal subunit protein uL6 (178 aa).

It belongs to the universal ribosomal protein uL6 family. As to quaternary structure, part of the 50S ribosomal subunit.

Functionally, this protein binds to the 23S rRNA, and is important in its secondary structure. It is located near the subunit interface in the base of the L7/L12 stalk, and near the tRNA binding site of the peptidyltransferase center. The sequence is that of Large ribosomal subunit protein uL6 from Oenococcus oeni (strain ATCC BAA-331 / PSU-1).